Here is a 385-residue protein sequence, read N- to C-terminus: Mitochondrial fission regulator 2 (385 aa).

Position 2 is an N-acetylserine (S2). S119 carries the post-translational modification Phosphoserine. The segment at 195–268 (SVDPDQLPGS…SHHSKSQRNK (74 aa)) is disordered. The segment covering 207–216 (SPPPPPPLPP) has biased composition (pro residues). Polar residues predominate over residues 231–257 (PGSNNICDSDNPATEMSKQNPAANKTN). Phosphoserine occurs at positions 291 and 328. A disordered region spans residues 331-363 (KENRSWESSPFSSPETSRFGHHISQSEGQRTKE). Residues 336-346 (WESSPFSSPET) show a composition bias toward polar residues.

The protein belongs to the MTFR1 family.

It localises to the mitochondrion. Its function is as follows. May play a role in mitochondrial aerobic respiration essentially in the testis. Can also promote mitochondrial fission. This is Mitochondrial fission regulator 2 (MTFR2) from Homo sapiens (Human).